A 289-amino-acid polypeptide reads, in one-letter code: Pantothenate synthetase (289 aa).

30 to 37 (MGYLHKGH) is a binding site for ATP. Histidine 37 acts as the Proton donor in catalysis. Residue glutamine 61 coordinates (R)-pantoate. Position 61 (glutamine 61) interacts with beta-alanine. An ATP-binding site is contributed by 147–150 (GEKD). Residue glutamine 153 participates in (R)-pantoate binding. ATP-binding positions include valine 176 and 184-187 (CSSR).

This sequence belongs to the pantothenate synthetase family. As to quaternary structure, homodimer.

Its subcellular location is the cytoplasm. It catalyses the reaction (R)-pantoate + beta-alanine + ATP = (R)-pantothenate + AMP + diphosphate + H(+). Its pathway is cofactor biosynthesis; (R)-pantothenate biosynthesis; (R)-pantothenate from (R)-pantoate and beta-alanine: step 1/1. Functionally, catalyzes the condensation of pantoate with beta-alanine in an ATP-dependent reaction via a pantoyl-adenylate intermediate. The chain is Pantothenate synthetase from Allorhizobium ampelinum (strain ATCC BAA-846 / DSM 112012 / S4) (Agrobacterium vitis (strain S4)).